A 489-amino-acid polypeptide reads, in one-letter code: MIKITVKRFNGEKEYLESYEVPENITVLEALEYINKHYEANILFRASCRNAQCGSCAVTINGEPRLACETKVEDGMIIEPLRGFKVIRDLIVDREPYYKKLLGIKNYLIRKNYPEELEILIPKYVEENKELRGCIDCLSCLSVCPAREVSDYPGPTFMRQLARFAFDKRDEDGREITAYFENIYNCTTCAKCVEVCPKEIDIVHRAIEKLRALAFSKGYYIENHLKVRENVLKYNRSVVEEELPLLKQVADFYPAESEKLRVAFFTGCLVDFRLQNVGKDAIKVLNAHGVSVVIPKNQVCCGSPFFRTGQRDVAEMLKRKNLEIFNKLDVDCVVTICAGCGSTLKNDYKERKFEVKDITEVLTEVGLLKYKPLKMRITYHDPCHLRRGQKIYKQPREILKSIPELEFIDIEARCCGAGGGVRSGKPDIANLIGKSRARMIYDANVDAVITVCPFCEYHIRDSLKRFKEENKIDKEIDVMNIVSLLAKVI.

The 83-residue stretch at 2–84 (IKITVKRFNG…GMIIEPLRGF (83 aa)) folds into the 2Fe-2S ferredoxin-type domain. 4 residues coordinate [2Fe-2S] cluster: Cys48, Cys53, Cys56, and Cys68. 4Fe-4S ferredoxin-type domains are found at residues 123–155 (KYVE…YPGP) and 177–205 (TAYF…IVHR). Residues Cys134, Cys137, Cys140, Cys144, Cys186, Cys189, Cys192, and Cys196 each contribute to the [4Fe-4S] cluster site.

The protein belongs to the succinate dehydrogenase/fumarate reductase iron-sulfur protein family.

This is an uncharacterized protein from Methanocaldococcus jannaschii (strain ATCC 43067 / DSM 2661 / JAL-1 / JCM 10045 / NBRC 100440) (Methanococcus jannaschii).